The primary structure comprises 368 residues: MGFNTNLKEQVITFFSALSLSKDFFNFIWIAFSILILLLTITIGVLVLVWLERKISAGIQQRIGPEYAGPLGIIQALADGFKLLLKEDIIPSKGDNWLFNIGPAIVVIPVFLSYLVIPFGHNIILADLNIGVFFWIAISSIVPLGLLMAGYGSNNKYSFLGGLRAAAQSISYEIPLALCVLSISLQLSNSLSTVDIVEAQAKYGFWGWNVWRQPIGFLAFFIASLAECERLPFDLPEAEEELVAGYQTEYSGIKFGLFYVASYLNLLASSLFVTILYLGGWHFSIPFLLNSNYLEWVFSHGSNQVINIIIGIIIVLIKSYLFSFIAIMTRWTLPRVRMDQLLDLGWKFLLPIALGNLLLTASFQAFLL.

6 helical membrane passes run 27-47 (FIWIAFSILILLLTITIGVLV), 97-117 (WLFNIGPAIVVIPVFLSYLVI), 130-150 (IGVFFWIAISSIVPLGLLMAG), 269-289 (SSLFVTILYLGGWHFSIPFLL), 308-328 (IIIGIIIVLIKSYLFSFIAIM), and 348-368 (FLLPIALGNLLLTASFQAFLL).

This sequence belongs to the complex I subunit 1 family. In terms of assembly, NDH is composed of at least 16 different subunits, 5 of which are encoded in the nucleus.

The protein resides in the plastid. Its subcellular location is the chloroplast thylakoid membrane. It catalyses the reaction a plastoquinone + NADH + (n+1) H(+)(in) = a plastoquinol + NAD(+) + n H(+)(out). The enzyme catalyses a plastoquinone + NADPH + (n+1) H(+)(in) = a plastoquinol + NADP(+) + n H(+)(out). In terms of biological role, NDH shuttles electrons from NAD(P)H:plastoquinone, via FMN and iron-sulfur (Fe-S) centers, to quinones in the photosynthetic chain and possibly in a chloroplast respiratory chain. The immediate electron acceptor for the enzyme in this species is believed to be plastoquinone. Couples the redox reaction to proton translocation, and thus conserves the redox energy in a proton gradient. In Physcomitrium patens (Spreading-leaved earth moss), this protein is NAD(P)H-quinone oxidoreductase subunit 1, chloroplastic.